A 93-amino-acid polypeptide reads, in one-letter code: Acylphosphatase (93 aa).

An Acylphosphatase-like domain is found at 4–91; sequence TLHLVIHGRV…PAGTGFRVAA (88 aa). Catalysis depends on residues R19 and N37.

It belongs to the acylphosphatase family.

It carries out the reaction an acyl phosphate + H2O = a carboxylate + phosphate + H(+). The sequence is that of Acylphosphatase (acyP) from Azorhizobium caulinodans (strain ATCC 43989 / DSM 5975 / JCM 20966 / LMG 6465 / NBRC 14845 / NCIMB 13405 / ORS 571).